The following is a 455-amino-acid chain: MGACLGACSLLSCASCLCGSAPCILCSCCPASRNSTVSRLIFTFFLFLGVLVSIIMLSPGVESQLYKLPWVCEEGAGIPTVLQGHIDCGSLLGYRAVYRMCFATAAFFFFFTLLMLCVSSSRDPRAAIQNGFWFFKFLILVGLTVGAFYIPDGSFTNIWFYFGVVGSFLFILIQLVLLIDFAHSWNQRWLGKAEECDSRAWYAGLFFFTLLFYLLSIAAVALMFMYYTEPSGCHEGKVFISLNLTFCVCVSIAAVLPKVQDAQPNSGLLQASVITLYTMFVTWSALSSIPEQKCNPHLPTQLGNETVVAGPEGYETQWWDAPSIVGLIIFLLCTLFISLRSSDHRQVNSLMQTEECPPMLDATQQQQQVAACEGRAFDNEQDGVTYSYSFFHFCLVLASLHVMMTLTNWYKPGETRKMISTWTAVWVKICASWAGLLLYLWTLVAPLLLRNRDFS.

The next 11 helical transmembrane spans lie at 5–27 (LGACSLLSCASCLCGSAPCILCS), 40–57 (LIFTFFLFLGVLVSIIML), 96–118 (AVYRMCFATAAFFFFFTLLMLCV), 131–150 (GFWFFKFLILVGLTVGAFYI), 160–182 (FYFGVVGSFLFILIQLVLLIDFA), 202–224 (YAGLFFFTLLFYLLSIAAVALMF), 239–256 (FISLNLTFCVCVSIAAVL), 268–290 (LLQASVITLYTMFVTWSALSSIP), 317–339 (QWWDAPSIVGLIIFLLCTLFISL), 385–407 (TYSYSFFHFCLVLASLHVMMTLT), and 422–444 (WTAVWVKICASWAGLLLYLWTLV).

This sequence belongs to the TDE1 family.

It is found in the cell membrane. It carries out the reaction a 1,2-diacyl-sn-glycero-3-phospho-L-serine(in) = a 1,2-diacyl-sn-glycero-3-phospho-L-serine(out). It catalyses the reaction a 1,2-diacyl-sn-glycero-3-phosphocholine(in) = a 1,2-diacyl-sn-glycero-3-phosphocholine(out). The enzyme catalyses a 1,2-diacyl-sn-glycero-3-phosphoethanolamine(in) = a 1,2-diacyl-sn-glycero-3-phosphoethanolamine(out). Non-ATP-dependent, non-specific lipid transporter for phosphatidylserine, phosphatidylcholine, and phosphatidylethanolamine. Functions as a scramblase that flips lipids in both directions across the membrane. In contrast to SERINC3 and SERINC5, has no effect on HIV-1 particles infectivity. The protein is Serine incorporator 2 of Homo sapiens (Human).